The sequence spans 1077 residues: FKBP12-associated protein 1 homolog (1077 aa).

The disordered stretch occupies residues 1–173 (METSKNPSDL…MPKNSKEIKK (173 aa)). The span at 15-29 (ANVKKNRRRFQKSQK) shows a compositional bias: basic residues. Ser33 carries the post-translational modification Phosphoserine. Residues 52-64 (EEVKTSLKEDSSK) show a composition bias toward basic and acidic residues. The segment covering 76-87 (PTSSVQLNVSKN) has biased composition (polar residues). The segment covering 100–116 (SSKDEELRKHAKGEGKR) has biased composition (basic and acidic residues). The span at 136–149 (SSNSSQETSSSKGS) shows a compositional bias: low complexity. Residues 153-173 (KSERSREAKSRMPKNSKEIKK) show a composition bias toward basic and acidic residues. An RING-type; atypical zinc finger spans residues 197–247 (CSVCTDTINPSTSIWSCGTCYHVFHLSCIRKWCKNSIEQRNEDAWRCPYCQ). 8 NF-X1-type zinc fingers span residues 290-308 (CEHP…PCTA), 348-367 (CGEH…ACFE), 420-441 (CGLH…HCPF), 485-503 (CGHR…TCSE), 541-558 (CGRH…SKAQ), 595-614 (CGNH…RCLE), 708-729 (CKTH…SCKK), and 738-760 (CEHV…PCKA). An R3H domain is found at 835–897 (SDFADEVESL…KRNVMVYNKG (63 aa)).

Belongs to the NFX1 family.

It is found in the cytoplasm. It localises to the golgi apparatus. The protein resides in the nucleus. May play a role in transcription regulation. The sequence is that of FKBP12-associated protein 1 homolog (fap1) from Schizosaccharomyces pombe (strain 972 / ATCC 24843) (Fission yeast).